Reading from the N-terminus, the 361-residue chain is uncharacterized protein (361 aa).

ATP is bound at residue 41–48 (GPLNSGKT).

This sequence belongs to the archaeal ATPase family.

This is an uncharacterized protein from Methanocaldococcus jannaschii (strain ATCC 43067 / DSM 2661 / JAL-1 / JCM 10045 / NBRC 100440) (Methanococcus jannaschii).